The chain runs to 177 residues: Large ribosomal subunit protein uL6 (177 aa).

Belongs to the universal ribosomal protein uL6 family. Part of the 50S ribosomal subunit.

In terms of biological role, this protein binds to the 23S rRNA, and is important in its secondary structure. It is located near the subunit interface in the base of the L7/L12 stalk, and near the tRNA binding site of the peptidyltransferase center. This Rhodospirillum centenum (strain ATCC 51521 / SW) protein is Large ribosomal subunit protein uL6.